The following is a 76-amino-acid chain: UPF0346 protein lhv_1069 (76 aa).

The protein belongs to the UPF0346 family.

This Lactobacillus helveticus (strain DPC 4571) protein is UPF0346 protein lhv_1069.